The sequence spans 740 residues: Ion-translocating oxidoreductase complex subunit C (740 aa).

2 consecutive 4Fe-4S ferredoxin-type domains span residues glycine 369 to tyrosine 397 and lysine 407 to phenylalanine 436. [4Fe-4S] cluster-binding residues include cysteine 377, cysteine 380, cysteine 383, cysteine 387, cysteine 416, cysteine 419, cysteine 422, and cysteine 426. The tract at residues lysine 602–alanine 717 is disordered. Low complexity-rich tracts occupy residues glutamine 605–glutamine 615 and glutamine 637–glutamine 647.

The protein belongs to the 4Fe4S bacterial-type ferredoxin family. RnfC subfamily. The complex is composed of six subunits: RsxA, RsxB, RsxC, RsxD, RsxE and RsxG. [4Fe-4S] cluster serves as cofactor.

It localises to the cell inner membrane. Its function is as follows. Part of a membrane-bound complex that couples electron transfer with translocation of ions across the membrane. Required to maintain the reduced state of SoxR. The chain is Ion-translocating oxidoreductase complex subunit C from Escherichia coli (strain ATCC 8739 / DSM 1576 / NBRC 3972 / NCIMB 8545 / WDCM 00012 / Crooks).